The sequence spans 159 residues: Protein SPA, chloroplastic (159 aa).

The N-terminal 47 residues, 1–47 (MLTAPSLSRFKSPFISSPLKLPTLSSSFFTQKFHQTCRRRNSYPCIK), are a transit peptide targeting the chloroplast. The helical transmembrane segment at 56 to 76 (VIAITVGVLSVAIGVGIPVFY) threads the bilayer. The CR-type-like stretch occupies residues 85–145 (KRENTQPCFP…TCTTCQGSGI (61 aa)). CXXCXGXG motif repeat units lie at residues 92–99 (CFPCTGTG), 103–110 (CRFCMGTG), 126–133 (CINCDGAG), and 137–144 (CTTCQGSG).

In terms of tissue distribution, expressed in source leaves. Lower levels of expression in fruits and stems.

It is found in the plastid. The protein localises to the chloroplast thylakoid membrane. Participates in determining harvest index (HI) by affecting source-sink carbon distribution. Up-regulates the conversion of fixed carbon to exportable sugars. This is Protein SPA, chloroplastic from Solanum lycopersicum (Tomato).